A 149-amino-acid chain; its full sequence is Large ribosomal subunit protein bL9 (149 aa).

The protein belongs to the bacterial ribosomal protein bL9 family.

Binds to the 23S rRNA. The protein is Large ribosomal subunit protein bL9 of Xanthomonas campestris pv. campestris (strain 8004).